The chain runs to 193 residues: Intracellular heme transport protein HutX (193 aa).

Y116 contributes to the heme binding site.

In terms of assembly, homodimer. Interacts with HutZ.

Its subcellular location is the cytoplasm. In terms of biological role, binds heme. Heme is transferred to the heme-degrading enzyme HutZ via a specific protein-protein interaction. The polypeptide is Intracellular heme transport protein HutX (Vibrio cholerae serotype O1 (strain ATCC 39315 / El Tor Inaba N16961)).